Here is a 400-residue protein sequence, read N- to C-terminus: Enoyl-[acyl-carrier-protein] reductase [NADH] (400 aa).

NAD(+)-binding positions include 48–53 (GSSSGY), 74–75 (FE), 111–112 (DA), and 139–140 (LA). Y225 provides a ligand contact to substrate. Y235 (proton donor) is an active-site residue. NAD(+)-binding positions include K244 and 273–275 (VVT).

It belongs to the TER reductase family. As to quaternary structure, monomer.

It catalyses the reaction a 2,3-saturated acyl-[ACP] + NAD(+) = a (2E)-enoyl-[ACP] + NADH + H(+). It participates in lipid metabolism; fatty acid biosynthesis. Involved in the final reduction of the elongation cycle of fatty acid synthesis (FAS II). Catalyzes the reduction of a carbon-carbon double bond in an enoyl moiety that is covalently linked to an acyl carrier protein (ACP). In Aliivibrio fischeri (strain MJ11) (Vibrio fischeri), this protein is Enoyl-[acyl-carrier-protein] reductase [NADH].